Reading from the N-terminus, the 246-residue chain is Cytochrome c oxidase subunit 2 (246 aa).

The next 2 helical transmembrane spans lie at 31–51 (HMMYYLALMLGLVSYMLYVMM) and 72–92 (IMWTMFPAVMLLLMAFPSFML). Residues histidine 175, cysteine 210, glutamate 212, cysteine 214, histidine 218, and methionine 221 each coordinate Cu cation. Glutamate 212 contributes to the Mg(2+) binding site.

It belongs to the cytochrome c oxidase subunit 2 family. In terms of assembly, component of the cytochrome c oxidase (complex IV, CIV), a multisubunit enzyme composed of a catalytic core of 3 subunits and several supernumerary subunits. The complex exists as a monomer or a dimer and forms supercomplexes (SCs) in the inner mitochondrial membrane with ubiquinol-cytochrome c oxidoreductase (cytochrome b-c1 complex, complex III, CIII). Cu cation serves as cofactor.

The protein resides in the mitochondrion inner membrane. The catalysed reaction is 4 Fe(II)-[cytochrome c] + O2 + 8 H(+)(in) = 4 Fe(III)-[cytochrome c] + 2 H2O + 4 H(+)(out). In terms of biological role, component of the cytochrome c oxidase, the last enzyme in the mitochondrial electron transport chain which drives oxidative phosphorylation. The respiratory chain contains 3 multisubunit complexes succinate dehydrogenase (complex II, CII), ubiquinol-cytochrome c oxidoreductase (cytochrome b-c1 complex, complex III, CIII) and cytochrome c oxidase (complex IV, CIV), that cooperate to transfer electrons derived from NADH and succinate to molecular oxygen, creating an electrochemical gradient over the inner membrane that drives transmembrane transport and the ATP synthase. Cytochrome c oxidase is the component of the respiratory chain that catalyzes the reduction of oxygen to water. Electrons originating from reduced cytochrome c in the intermembrane space (IMS) are transferred via the dinuclear copper A center (CU(A)) of subunit 2 and heme A of subunit 1 to the active site in subunit 1, a binuclear center (BNC) formed by heme A3 and copper B (CU(B)). The BNC reduces molecular oxygen to 2 water molecules using 4 electrons from cytochrome c in the IMS and 4 protons from the mitochondrial matrix. This Debaryomyces hansenii (strain ATCC 36239 / CBS 767 / BCRC 21394 / JCM 1990 / NBRC 0083 / IGC 2968) (Yeast) protein is Cytochrome c oxidase subunit 2 (COX2).